Consider the following 61-residue polypeptide: Small ribosomal subunit protein uS14B (61 aa).

Residues Cys24, Cys27, Cys40, and Cys43 each coordinate Zn(2+).

Belongs to the universal ribosomal protein uS14 family. Zinc-binding uS14 subfamily. As to quaternary structure, part of the 30S ribosomal subunit. Contacts proteins S3 and S10. Zn(2+) is required as a cofactor.

In terms of biological role, binds 16S rRNA, required for the assembly of 30S particles and may also be responsible for determining the conformation of the 16S rRNA at the A site. The polypeptide is Small ribosomal subunit protein uS14B (Cutibacterium acnes (strain DSM 16379 / KPA171202) (Propionibacterium acnes)).